The sequence spans 167 residues: SsrA-binding protein (167 aa).

Over residues 139-158 (QNHDKRDAAKERDWQRDKQR) the composition is skewed to basic and acidic residues. Positions 139–167 (QNHDKRDAAKERDWQRDKQRVMRRHNRDA) are disordered.

The protein belongs to the SmpB family.

The protein localises to the cytoplasm. Functionally, required for rescue of stalled ribosomes mediated by trans-translation. Binds to transfer-messenger RNA (tmRNA), required for stable association of tmRNA with ribosomes. tmRNA and SmpB together mimic tRNA shape, replacing the anticodon stem-loop with SmpB. tmRNA is encoded by the ssrA gene; the 2 termini fold to resemble tRNA(Ala) and it encodes a 'tag peptide', a short internal open reading frame. During trans-translation Ala-aminoacylated tmRNA acts like a tRNA, entering the A-site of stalled ribosomes, displacing the stalled mRNA. The ribosome then switches to translate the ORF on the tmRNA; the nascent peptide is terminated with the 'tag peptide' encoded by the tmRNA and targeted for degradation. The ribosome is freed to recommence translation, which seems to be the essential function of trans-translation. The sequence is that of SsrA-binding protein from Xanthomonas oryzae pv. oryzae (strain MAFF 311018).